The sequence spans 449 residues: Phosphoglucosamine mutase (449 aa).

S102 functions as the Phosphoserine intermediate in the catalytic mechanism. Mg(2+) contacts are provided by S102, D241, D243, and D245. The residue at position 102 (S102) is a Phosphoserine.

The protein belongs to the phosphohexose mutase family. The cofactor is Mg(2+). Post-translationally, activated by phosphorylation.

It catalyses the reaction alpha-D-glucosamine 1-phosphate = D-glucosamine 6-phosphate. Catalyzes the conversion of glucosamine-6-phosphate to glucosamine-1-phosphate. The sequence is that of Phosphoglucosamine mutase from Pseudoalteromonas translucida (strain TAC 125).